We begin with the raw amino-acid sequence, 348 residues long: Fe(3+) ions import ATP-binding protein FbpC (348 aa).

The ABC transporter domain maps to 7 to 237 (VELRNVTKRF…PASRFMASFM (231 aa)). 39 to 46 (GPSGCGKT) lines the ATP pocket.

The protein belongs to the ABC transporter superfamily. Fe(3+) ion importer (TC 3.A.1.10) family. As to quaternary structure, the complex is composed of two ATP-binding proteins (FbpC), two transmembrane proteins (FbpB) and a solute-binding protein (FbpA).

Its subcellular location is the cell inner membrane. It catalyses the reaction Fe(3+)(out) + ATP + H2O = Fe(3+)(in) + ADP + phosphate + H(+). Part of the ABC transporter complex FbpABC involved in Fe(3+) ions import. Responsible for energy coupling to the transport system. This chain is Fe(3+) ions import ATP-binding protein FbpC, found in Escherichia coli (strain K12).